The sequence spans 461 residues: Mannose-6-phosphate isomerase (461 aa).

Gln107, His109, Glu134, and His291 together coordinate Zn(2+). Residue Arg310 is part of the active site.

Belongs to the mannose-6-phosphate isomerase type 1 family. Zn(2+) is required as a cofactor.

It localises to the cytoplasm. It catalyses the reaction D-mannose 6-phosphate = D-fructose 6-phosphate. It functions in the pathway nucleotide-sugar biosynthesis; GDP-alpha-D-mannose biosynthesis; alpha-D-mannose 1-phosphate from D-fructose 6-phosphate: step 1/2. Involved in the synthesis of the GDP-mannose and dolichol-phosphate-mannose required for a number of critical mannosyl transfer reactions. In Emericella nidulans (strain FGSC A4 / ATCC 38163 / CBS 112.46 / NRRL 194 / M139) (Aspergillus nidulans), this protein is Mannose-6-phosphate isomerase (manA).